Reading from the N-terminus, the 255-residue chain is Probable transcriptional regulatory protein PCC8801_2028 (255 aa).

Belongs to the TACO1 family.

The protein localises to the cytoplasm. The protein is Probable transcriptional regulatory protein PCC8801_2028 of Rippkaea orientalis (strain PCC 8801 / RF-1) (Cyanothece sp. (strain PCC 8801)).